The sequence spans 468 residues: ATP synthase subunit beta (468 aa).

155–162 (GGAGVGKT) contacts ATP.

This sequence belongs to the ATPase alpha/beta chains family. As to quaternary structure, F-type ATPases have 2 components, CF(1) - the catalytic core - and CF(0) - the membrane proton channel. CF(1) has five subunits: alpha(3), beta(3), gamma(1), delta(1), epsilon(1). CF(0) has three main subunits: a(1), b(2) and c(9-12). The alpha and beta chains form an alternating ring which encloses part of the gamma chain. CF(1) is attached to CF(0) by a central stalk formed by the gamma and epsilon chains, while a peripheral stalk is formed by the delta and b chains.

Its subcellular location is the cell membrane. The catalysed reaction is ATP + H2O + 4 H(+)(in) = ADP + phosphate + 5 H(+)(out). Its function is as follows. Produces ATP from ADP in the presence of a proton gradient across the membrane. The catalytic sites are hosted primarily by the beta subunits. This Streptococcus thermophilus (strain CNRZ 1066) protein is ATP synthase subunit beta.